A 69-amino-acid chain; its full sequence is MPLTVKCPICKTPVEWAPQSEFKPFCSERCKLIDLGDWASEKHAIPVKSEFDLDALDEFDLDEDAFFKE.

The Zn(2+) site is built by cysteine 7, cysteine 10, cysteine 26, and cysteine 30.

The protein belongs to the DNA gyrase inhibitor YacG family. In terms of assembly, interacts with GyrB. Requires Zn(2+) as cofactor.

Its function is as follows. Inhibits all the catalytic activities of DNA gyrase by preventing its interaction with DNA. Acts by binding directly to the C-terminal domain of GyrB, which probably disrupts DNA binding by the gyrase. The protein is DNA gyrase inhibitor YacG of Shewanella putrefaciens (strain CN-32 / ATCC BAA-453).